Consider the following 226-residue polypeptide: Ribose-5-phosphate isomerase A (226 aa).

Residues 28–31 (TGST), 84–87 (DGAD), and 97–100 (KGLG) contribute to the substrate site. Catalysis depends on Glu-106, which acts as the Proton acceptor. Substrate is bound at residue Lys-124.

The protein belongs to the ribose 5-phosphate isomerase family. In terms of assembly, homodimer.

The catalysed reaction is aldehydo-D-ribose 5-phosphate = D-ribulose 5-phosphate. The protein operates within carbohydrate degradation; pentose phosphate pathway; D-ribose 5-phosphate from D-ribulose 5-phosphate (non-oxidative stage): step 1/1. In terms of biological role, catalyzes the reversible conversion of ribose-5-phosphate to ribulose 5-phosphate. The chain is Ribose-5-phosphate isomerase A from Deinococcus radiodurans (strain ATCC 13939 / DSM 20539 / JCM 16871 / CCUG 27074 / LMG 4051 / NBRC 15346 / NCIMB 9279 / VKM B-1422 / R1).